The following is a 361-amino-acid chain: Oxidoreductase lepF (361 aa).

The chain crosses the membrane as a helical span at residues 257-277 (MLMLVLQAVLLPVFYVVAMPL).

The protein belongs to the NmrA-type oxidoreductase family.

The protein resides in the membrane. Its function is as follows. Oxidoreductase; part of the gene cluster 23 that mediates the biosynthesis of a family of 2-pyridones known as leporins. The hybrid PKS-NRPS synthetase lepA and the enoyl reductase lepG are responsible for fusion of phenylalanine with a hexaketide and subsequent release of the stable tetramic acid precursor, pre-leporin C. Because lepA lacks a designated enoylreductase (ER) domain, the required activity is provided the enoyl reductase lepG. It is possible that the dehydrogenase lepF also participates in production of pre-leporin C. Cytochrome P450 monooxygenase lepH is then required for the ring expansion step to yield leporin C. Leporin C is then presumably further oxidized by the N-hydroxylase lepD to form leporin B. LepI may possess a function in biosynthesis upstream of lepA. Leporin B is further oxidized in the presence of ferric ion to give the leporin B trimer-iron chelate, but whether or not this reaction is catalyzed by an enzyme in the pathway or by ferric ion is not determined yet. This chain is Oxidoreductase lepF, found in Aspergillus flavus (strain ATCC 200026 / FGSC A1120 / IAM 13836 / NRRL 3357 / JCM 12722 / SRRC 167).